Here is a 103-residue protein sequence, read N- to C-terminus: Alpha-ketoglutarate dehydrogenase component 4 (103 aa).

Position 1 is an N-acetylmethionine (methionine 1). Lysine 5 is modified (N6-succinyllysine). The disordered stretch occupies residues 23 to 70; the sequence is IRFPDRRDNPKPNVSEVLRSAGLPSHTSSISQHSKGSKSPDWLMHQGP. Residues 47 to 61 are compositionally biased toward low complexity; it reads SHTSSISQHSKGSKS. A phosphoserine mark is found at serine 61 and serine 90.

The protein belongs to the alpha-ketoglutarate dehydrogenase component 4 family. In terms of assembly, component of the 2-oxoglutarate dehydrogenase complex (OGDHC), composed of OGDH (2-oxoglutarate dehydrogenase; also called E1 subunit), DLST (dihydrolipoamide succinyltransferase; also called E2 subunit) and DLD (dihydrolipoamide dehydrogenase; also called E3 subunit), and the assembly factor KGD4. Within OGDHC complex, interacts (via N-terminus) with E3 subunit and (via C-terminus) with E2 subunit.

Its subcellular location is the mitochondrion. Functionally, molecular adapter that is necessary to form a stable 2-oxoglutarate dehydrogenase enzyme complex (OGDHC). Enables the specific recruitment of E3 subunit to E2 subunit in the 2-oxoglutarate dehydrogenase complex (OGDHC). This Bos taurus (Bovine) protein is Alpha-ketoglutarate dehydrogenase component 4 (KGD4).